We begin with the raw amino-acid sequence, 381 residues long: Alkanesulfonate monooxygenase (381 aa).

It belongs to the SsuD family. In terms of assembly, homotetramer.

The catalysed reaction is an alkanesulfonate + FMNH2 + O2 = an aldehyde + FMN + sulfite + H2O + 2 H(+). In terms of biological role, catalyzes the desulfonation of aliphatic sulfonates. The protein is Alkanesulfonate monooxygenase of Escherichia coli O9:H4 (strain HS).